Here is a 517-residue protein sequence, read N- to C-terminus: T-box transcription factor TBX5 (517 aa).

The segment at 1-46 (MADADEGFGLARTPLEPDSKDRSCDSKPESALGAPSKSPSSPQAAF) is disordered. The segment covering 15–28 (LEPDSKDRSCDSKP) has biased composition (basic and acidic residues). The segment covering 34–45 (APSKSPSSPQAA) has biased composition (low complexity). The segment at residues 58–238 (LHERELWLKF…NNPFAKGFRG (181 aa)) is a DNA-binding region (T-box). Disordered stretches follow at residues 270–313 (HSPF…YPLA) and 331–369 (SSTEHPYKKPYMETSPSEEDTFYRSGYPQQQGLSTSYRT). The span at 271-300 (SPFSSETRALSTSSNLGSQYQCENGVSGPS) shows a compositional bias: polar residues. The residue at position 338 (Lys338) is an N6-acetyllysine. Over residues 357 to 369 (YPQQQGLSTSYRT) the composition is skewed to polar residues.

As to quaternary structure, monomer. Homodimer (via the T-box); binds DNA as homodimer. Interacts (via the T-box) with NKX2-5 (via the homeobox); this complex binds DNA. Interacts with GATA4. Interacts with KAT2A and KAT2B. Acetylation at Lys-338 by KAT2A and KAT2B promotes nuclear retention.

The protein localises to the nucleus. It localises to the cytoplasm. Functionally, DNA-binding protein that regulates the transcription of several genes and is involved in heart development and limb pattern formation. Binds to the core DNA motif of NPPA promoter. This chain is T-box transcription factor TBX5 (Tbx5), found in Rattus norvegicus (Rat).